Consider the following 343-residue polypeptide: Protein RecA (343 aa).

65–72 contributes to the ATP binding site; that stretch reads GPESSGKT.

The protein belongs to the RecA family.

Its subcellular location is the cytoplasm. Functionally, can catalyze the hydrolysis of ATP in the presence of single-stranded DNA, the ATP-dependent uptake of single-stranded DNA by duplex DNA, and the ATP-dependent hybridization of homologous single-stranded DNAs. It interacts with LexA causing its activation and leading to its autocatalytic cleavage. In Campylobacter jejuni subsp. doylei (strain ATCC BAA-1458 / RM4099 / 269.97), this protein is Protein RecA.